The chain runs to 169 residues: uncharacterized protein (169 aa).

This is an uncharacterized protein from Mycoplasma genitalium (strain ATCC 33530 / DSM 19775 / NCTC 10195 / G37) (Mycoplasmoides genitalium).